The primary structure comprises 372 residues: Queuine tRNA-ribosyltransferase (372 aa).

The active-site Proton acceptor is Asp92. Substrate-binding positions include 92-96, Asp146, Gln188, and Gly215; that span reads DSGGY. The segment at 246-252 is RNA binding; sequence GIGTIRE. The Nucleophile role is filled by Asp265. Positions 270-274 are RNA binding; important for wobble base 34 recognition; it reads TRLGR. Cys303, Cys305, Cys308, and His334 together coordinate Zn(2+).

The protein belongs to the queuine tRNA-ribosyltransferase family. Homodimer. Within each dimer, one monomer is responsible for RNA recognition and catalysis, while the other monomer binds to the replacement base PreQ1. Requires Zn(2+) as cofactor.

It carries out the reaction 7-aminomethyl-7-carbaguanine + guanosine(34) in tRNA = 7-aminomethyl-7-carbaguanosine(34) in tRNA + guanine. It functions in the pathway tRNA modification; tRNA-queuosine biosynthesis. In terms of biological role, catalyzes the base-exchange of a guanine (G) residue with the queuine precursor 7-aminomethyl-7-deazaguanine (PreQ1) at position 34 (anticodon wobble position) in tRNAs with GU(N) anticodons (tRNA-Asp, -Asn, -His and -Tyr). Catalysis occurs through a double-displacement mechanism. The nucleophile active site attacks the C1' of nucleotide 34 to detach the guanine base from the RNA, forming a covalent enzyme-RNA intermediate. The proton acceptor active site deprotonates the incoming PreQ1, allowing a nucleophilic attack on the C1' of the ribose to form the product. After dissociation, two additional enzymatic reactions on the tRNA convert PreQ1 to queuine (Q), resulting in the hypermodified nucleoside queuosine (7-(((4,5-cis-dihydroxy-2-cyclopenten-1-yl)amino)methyl)-7-deazaguanosine). This chain is Queuine tRNA-ribosyltransferase, found in Prochlorococcus marinus (strain SARG / CCMP1375 / SS120).